Reading from the N-terminus, the 658-residue chain is Staphylocoagulase (658 aa).

An N-terminal signal peptide occupies residues 1–26; that stretch reads MKKQIISLGALAVASSLFTWDNKADA. Polar residues-rich tracts occupy residues 391–406, 428–440, 499–514, and 521–531; these read MEQN…TQPT, GTES…QGES, PSET…QDGT, and PTQNKPSETNA. Residues 391–531 are disordered; it reads MEQNRPSLSD…TQNKPSETNA (141 aa). 6 repeat units span residues 492–518, 519–545, 546–572, 573–599, 600–626, and 627–653. The tract at residues 492–653 is 6 X 27 AA tandem repeats of A-R-P-[RT]-[FQY]-[NK]-K-P-S-[EK]-T-N-A-Y-N-V-T-T-[NH]-[QA]-[DN]-G-[TQ]-[VA]-[ST]-Y-G; it reads ARPRFNKPSE…THADGTATYG (162 aa). The segment at 619 to 658 is disordered; that stretch reads ANGQVSYGARPTQKKPSETNAYNVTTHADGTATYGPRVTK. Residues 636-646 are compositionally biased toward polar residues; sequence ETNAYNVTTHA.

The protein belongs to the staphylocoagulase family.

Its function is as follows. Staphylocoagulase is an extracellular protein which specifically forms a complex with human prothrombin. This complex named staphylothrombin can clot fibrinogen without any proteolytic cleavage of prothrombin. The chain is Staphylocoagulase from Staphylococcus aureus.